A 122-amino-acid polypeptide reads, in one-letter code: Large ribosomal subunit protein bL12 (122 aa).

Belongs to the bacterial ribosomal protein bL12 family. As to quaternary structure, homodimer. Part of the ribosomal stalk of the 50S ribosomal subunit. Forms a multimeric L10(L12)X complex, where L10 forms an elongated spine to which 2 to 4 L12 dimers bind in a sequential fashion. Binds GTP-bound translation factors.

Forms part of the ribosomal stalk which helps the ribosome interact with GTP-bound translation factors. Is thus essential for accurate translation. This is Large ribosomal subunit protein bL12 from Xylella fastidiosa (strain M12).